The following is a 175-amino-acid chain: NADH dehydrogenase [ubiquinone] 1 alpha subcomplex assembly factor 4 (175 aa).

Glycine 2 carries the N-myristoyl glycine lipid modification. Serine 35 carries the phosphoserine modification.

This sequence belongs to the NDUFAF4 family. Binds calmodulin. Interacts with NDUFAF3. As to quaternary structure, (Microbial infection) Interacts with the vesicular stomatitis virus matrix protein/M; the interaction inhibits viral propagation. Post-translationally, phosphorylated on serine. Prolactin stimulate serine phosphorylation.

It is found in the mitochondrion. The protein localises to the membrane. Involved in the assembly of mitochondrial NADH:ubiquinone oxidoreductase complex (complex I). May be involved in cell proliferation and survival of hormone-dependent tumor cells. May be a regulator of breast tumor cell invasion. The sequence is that of NADH dehydrogenase [ubiquinone] 1 alpha subcomplex assembly factor 4 from Homo sapiens (Human).